The primary structure comprises 577 residues: Anthranilate synthase alpha subunit 1, chloroplastic (577 aa).

Residues 1-34 (MASLVLSLRIAPSTPPLGLGGGRFRGRRGAVACR) constitute a chloroplast transit peptide.

Belongs to the anthranilate synthase component I family. As to quaternary structure, heterotetramer consisting of two non-identical subunits: a beta subunit and a large alpha subunit.

The protein localises to the plastid. The protein resides in the chloroplast. The catalysed reaction is chorismate + L-glutamine = anthranilate + pyruvate + L-glutamate + H(+). The protein operates within amino-acid biosynthesis; L-tryptophan biosynthesis; L-tryptophan from chorismate: step 1/5. Its activity is regulated as follows. Feedback inhibition by tryptophan. Part of a heterotetrameric complex that catalyzes the two-step biosynthesis of anthranilate, an intermediate in the biosynthesis of L-tryptophan. In the first step, the glutamine-binding beta subunit of anthranilate synthase (AS) provides the glutamine amidotransferase activity which generates ammonia as a substrate that, along with chorismate, is used in the second step, catalyzed by the large alpha subunit of AS to produce anthranilate. This chain is Anthranilate synthase alpha subunit 1, chloroplastic, found in Oryza sativa subsp. japonica (Rice).